The following is a 60-amino-acid chain: Large ribosomal subunit protein bL32 (60 aa).

Residues 1-22 (MAVPKKKTSKSRRDMRRSHHAL) show a composition bias toward basic residues. The interval 1–27 (MAVPKKKTSKSRRDMRRSHHALKGSAY) is disordered.

It belongs to the bacterial ribosomal protein bL32 family.

This Rhodospirillum centenum (strain ATCC 51521 / SW) protein is Large ribosomal subunit protein bL32.